Reading from the N-terminus, the 512-residue chain is MGALEAERAANNATALETQSSPEDLGQPSPLRKIISVASIAAGVQFGWALQLSLLTPYIQLLGIPHKWSSYMWLCGPISGMIVQPIVGYHSDRCESRFGRRRPFIAAGVALVAVSVFLIGFAADMGHSFGDKLENKVRTRAIIIFLTGFWFLDVANNTLQGPCRAFLADLAAGDAKKTRVANACFSFFMAVGNVLGYAAGSYTNLHKMFPFTMTKACDIYCANLKTCFFLSITLLLIVTFSSLWYVKDKQWSPPQGDKEEKTSSLFFFGEIFGAVRHMKRPMVMLLIVTVINWIAWFPFILYDTDWMGREVYGGNSDGDERSKKLYDQGVQAGALGLMFNSILLGFVSLGVESIGRKMGGAKRLWGCVNFILAIGLAMTVLVTKSAEHHREIAGPLAGPSSGIKAGVFSLFTVLGIPLAITYSIPFALASIFSTNSGAGQGLSLGVLNIAICIPQMIVSFSSGPLDAQFGGGNLPSFVVGAIAAAVSGVLALTVLPSPPPDAPAMSGAMGFH.

Positions 1–27 (MGALEAERAANNATALETQSSPEDLGQ) are disordered. The Cytoplasmic segment spans residues 1–33 (MGALEAERAANNATALETQSSPEDLGQPSPLRK). Polar residues predominate over residues 11–22 (NNATALETQSSP). S20 bears the Phosphoserine mark. A helical transmembrane segment spans residues 34–54 (IISVASIAAGVQFGWALQLSL). Residues 55–67 (LTPYIQLLGIPHK) lie on the Extracellular side of the membrane. The chain crosses the membrane as a helical span at residues 68–88 (WSSYMWLCGPISGMIVQPIVG). Residues 89-102 (YHSDRCESRFGRRR) are Cytoplasmic-facing. A helical membrane pass occupies residues 103 to 123 (PFIAAGVALVAVSVFLIGFAA). The Extracellular portion of the chain corresponds to 124–140 (DMGHSFGDKLENKVRTR). A helical transmembrane segment spans residues 141 to 161 (AIIIFLTGFWFLDVANNTLQG). Residues 162 to 179 (PCRAFLADLAAGDAKKTR) lie on the Cytoplasmic side of the membrane. The chain crosses the membrane as a helical span at residues 180-200 (VANACFSFFMAVGNVLGYAAG). The Extracellular portion of the chain corresponds to 201–225 (SYTNLHKMFPFTMTKACDIYCANLK). The chain crosses the membrane as a helical span at residues 226 to 246 (TCFFLSITLLLIVTFSSLWYV). Over 247 to 281 (KDKQWSPPQGDKEEKTSSLFFFGEIFGAVRHMKRP) the chain is Cytoplasmic. The helical transmembrane segment at 282 to 302 (MVMLLIVTVINWIAWFPFILY) threads the bilayer. The Extracellular portion of the chain corresponds to 303–333 (DTDWMGREVYGGNSDGDERSKKLYDQGVQAG). A helical membrane pass occupies residues 334–354 (ALGLMFNSILLGFVSLGVESI). Residues 355-363 (GRKMGGAKR) are Cytoplasmic-facing. Residues 364–384 (LWGCVNFILAIGLAMTVLVTK) traverse the membrane as a helical segment. Over 385-406 (SAEHHREIAGPLAGPSSGIKAG) the chain is Extracellular. The helical transmembrane segment at 407-427 (VFSLFTVLGIPLAITYSIPFA) threads the bilayer. Over 428-440 (LASIFSTNSGAGQ) the chain is Cytoplasmic. Residues 441–461 (GLSLGVLNIAICIPQMIVSFS) form a helical membrane-spanning segment. The Extracellular segment spans residues 462–473 (SGPLDAQFGGGN). A helical membrane pass occupies residues 474-494 (LPSFVVGAIAAAVSGVLALTV). Residues 495–512 (LPSPPPDAPAMSGAMGFH) are Cytoplasmic-facing.

It belongs to the glycoside-pentoside-hexuronide (GPH) cation symporter transporter (TC 2.A.2.4) family. In terms of tissue distribution, widely expressed. Expressed in the endosperm and on the epidermis of the outer surface of the cotyledons of torpedo-stage or older embryos.

It localises to the cell membrane. The enzyme catalyses sucrose(out) + H(+)(out) = sucrose(in) + H(+)(in). Its pathway is glycan biosynthesis; sucrose metabolism. With respect to regulation, inhibited by protonophores (e.g. carbonyl cyanide m-chlorophenyl-hydrazone (CCCP)) and SH group inhibitors (e.g. p-chloromercuribenzene sulphonic acid (PCMBS)). Its function is as follows. Responsible in a heterologous system for the transport of sucrose into the cell, with the concomitant uptake of protons (symport system). Can also transport biotin, and probably maltose at a lesser rate. In planta, the role of SUC5 for the transport of sucrose seems to be negligible. Plays a role in the nutrition of the filial tissues during early seed development and is probably involved in the import of biotin into the endosperm and the embryo epidermis. The sequence is that of Sucrose transport protein SUC5 from Arabidopsis thaliana (Mouse-ear cress).